The primary structure comprises 417 residues: Serine--tRNA ligase (417 aa).

225-227 (TLE) lines the L-serine pocket. Residue 256–258 (RQE) participates in ATP binding. Glu279 provides a ligand contact to L-serine. 343-346 (EVSS) provides a ligand contact to ATP. Thr379 is a binding site for L-serine.

It belongs to the class-II aminoacyl-tRNA synthetase family. Type-1 seryl-tRNA synthetase subfamily. In terms of assembly, homodimer. The tRNA molecule binds across the dimer.

Its subcellular location is the cytoplasm. The enzyme catalyses tRNA(Ser) + L-serine + ATP = L-seryl-tRNA(Ser) + AMP + diphosphate + H(+). It catalyses the reaction tRNA(Sec) + L-serine + ATP = L-seryl-tRNA(Sec) + AMP + diphosphate + H(+). It participates in aminoacyl-tRNA biosynthesis; selenocysteinyl-tRNA(Sec) biosynthesis; L-seryl-tRNA(Sec) from L-serine and tRNA(Sec): step 1/1. In terms of biological role, catalyzes the attachment of serine to tRNA(Ser). Is also able to aminoacylate tRNA(Sec) with serine, to form the misacylated tRNA L-seryl-tRNA(Sec), which will be further converted into selenocysteinyl-tRNA(Sec). The polypeptide is Serine--tRNA ligase (Mycoplasma genitalium (strain ATCC 33530 / DSM 19775 / NCTC 10195 / G37) (Mycoplasmoides genitalium)).